The primary structure comprises 63 residues: Cecropin-1/3 (63 aa).

An N-terminal signal peptide occupies residues methionine 1–alanine 23. At arginine 62 the chain carries Arginine amide.

This sequence belongs to the cecropin family.

Its subcellular location is the secreted. Cecropins have lytic and antibacterial activity against several Gram-positive and Gram-negative bacteria. In Drosophila virilis (Fruit fly), this protein is Cecropin-1/3 (Cec1).